The following is a 206-amino-acid chain: N-(5'-phosphoribosyl)anthranilate isomerase (206 aa).

This sequence belongs to the TrpF family.

The enzyme catalyses N-(5-phospho-beta-D-ribosyl)anthranilate = 1-(2-carboxyphenylamino)-1-deoxy-D-ribulose 5-phosphate. It participates in amino-acid biosynthesis; L-tryptophan biosynthesis; L-tryptophan from chorismate: step 3/5. This is N-(5'-phosphoribosyl)anthranilate isomerase from Rubrobacter xylanophilus (strain DSM 9941 / JCM 11954 / NBRC 16129 / PRD-1).